Consider the following 301-residue polypeptide: Ornithine carbamoyltransferase (301 aa).

Carbamoyl phosphate is bound by residues Arg-100 and His-127–Gln-130. L-ornithine is bound by residues Asn-158, Asp-221, and Ser-225–Met-226. Carbamoyl phosphate-binding residues include Cys-260 and Arg-288.

The protein belongs to the aspartate/ornithine carbamoyltransferase superfamily. OTCase family.

Its subcellular location is the cytoplasm. The catalysed reaction is carbamoyl phosphate + L-ornithine = L-citrulline + phosphate + H(+). Its pathway is amino-acid biosynthesis; L-arginine biosynthesis; L-arginine from L-ornithine and carbamoyl phosphate: step 1/3. Its function is as follows. Reversibly catalyzes the transfer of the carbamoyl group from carbamoyl phosphate (CP) to the N(epsilon) atom of ornithine (ORN) to produce L-citrulline. The polypeptide is Ornithine carbamoyltransferase (argF) (Vibrio sp. (strain 2693)).